A 155-amino-acid polypeptide reads, in one-letter code: Ribosomal RNA large subunit methyltransferase H (155 aa).

Residues Leu72, Gly103, and 122-127 (LSALTL) each bind S-adenosyl-L-methionine.

Belongs to the RNA methyltransferase RlmH family. As to quaternary structure, homodimer.

Its subcellular location is the cytoplasm. The catalysed reaction is pseudouridine(1915) in 23S rRNA + S-adenosyl-L-methionine = N(3)-methylpseudouridine(1915) in 23S rRNA + S-adenosyl-L-homocysteine + H(+). Specifically methylates the pseudouridine at position 1915 (m3Psi1915) in 23S rRNA. In Shigella boydii serotype 18 (strain CDC 3083-94 / BS512), this protein is Ribosomal RNA large subunit methyltransferase H.